Here is a 104-residue protein sequence, read N- to C-terminus: Circadian clock oscillator protein KaiB (104 aa).

This sequence belongs to the KaiB family. The KaiABC complex composition changes during the circadian cycle to control KaiC phosphorylation. Complexes KaiC(6), KaiA(2-4):KaiC(6), KaiB(6):KaiC(6) and KaiC(6):KaiB(6):KaiA(12) are among the most important forms, many form cooperatively. Undergoes a major conformational rearrangment; in the free state forms homotetramers as a dimer of dimers. When bound to the CI domain of KaiC switches to a monomeric thioredoxin-fold (KaiB(fs)). KaiB(fs) binds CikA, leading it to dephosphorylate phospho-RpaA.

In terms of biological role, key component of the KaiABC oscillator complex, which constitutes the main circadian regulator in cyanobacteria. Complex composition changes during the circadian cycle to control KaiC phosphorylation. KaiA stimulates KaiC autophosphorylation, while KaiB sequesters KaiA, leading to KaiC autodephosphorylation. Phospho-Ser-431 KaiC accumulation triggers binding of KaiB to form the KaiB(6):KaiC(6) complex, leading to changes in output regulators CikA and SasA. KaiB switches to a thioredoxin-like fold (KaiB(fs)) when bound to KaiC. KaiB(6):KaiC(6) formation exposes a site for KaiA binding that sequesters KaiA from KaiC, making the KaiC(6):KaiB(6):KaiA(12) complex that results in KaiC autodephosphorylation. Its function is as follows. A metamorphic protein which reversibly switches between an inactive tetrameric fold and a rare, thioredoxin-like monomeric fold (KaiB(fs)). KaiB(fs) binds phospho-KaiC, KaiA and CikA. KaiA and CikA compete for binding to KaiB(fs), and KaiB(fs) and SasA compete for binding to KaiC, thus the clock oscillator and output signal pathway are tightly coupled. The chain is Circadian clock oscillator protein KaiB from Nostoc punctiforme (strain ATCC 29133 / PCC 73102).